The chain runs to 225 residues: NAD(P)H-quinone oxidoreductase subunit K, chloroplastic (225 aa).

Residues Cys-43, Cys-44, Cys-108, and Cys-139 each contribute to the [4Fe-4S] cluster site.

This sequence belongs to the complex I 20 kDa subunit family. As to quaternary structure, NDH is composed of at least 16 different subunits, 5 of which are encoded in the nucleus. [4Fe-4S] cluster serves as cofactor.

The protein localises to the plastid. It is found in the chloroplast thylakoid membrane. It catalyses the reaction a plastoquinone + NADH + (n+1) H(+)(in) = a plastoquinol + NAD(+) + n H(+)(out). The catalysed reaction is a plastoquinone + NADPH + (n+1) H(+)(in) = a plastoquinol + NADP(+) + n H(+)(out). In terms of biological role, NDH shuttles electrons from NAD(P)H:plastoquinone, via FMN and iron-sulfur (Fe-S) centers, to quinones in the photosynthetic chain and possibly in a chloroplast respiratory chain. The immediate electron acceptor for the enzyme in this species is believed to be plastoquinone. Couples the redox reaction to proton translocation, and thus conserves the redox energy in a proton gradient. The protein is NAD(P)H-quinone oxidoreductase subunit K, chloroplastic of Illicium oligandrum (Star anise).